The sequence spans 209 residues: Octanoyltransferase (209 aa).

A BPL/LPL catalytic domain is found at 29–209 (EHTPDELWVV…CHQLQPEIDS (181 aa)). Residues 71-78 (RGGQVTYH), 138-140 (SLG), and 151-153 (GLA) each bind substrate. The active-site Acyl-thioester intermediate is Cys169.

It belongs to the LipB family.

The protein localises to the cytoplasm. The enzyme catalyses octanoyl-[ACP] + L-lysyl-[protein] = N(6)-octanoyl-L-lysyl-[protein] + holo-[ACP] + H(+). Its pathway is protein modification; protein lipoylation via endogenous pathway; protein N(6)-(lipoyl)lysine from octanoyl-[acyl-carrier-protein]: step 1/2. Functionally, catalyzes the transfer of endogenously produced octanoic acid from octanoyl-acyl-carrier-protein onto the lipoyl domains of lipoate-dependent enzymes. Lipoyl-ACP can also act as a substrate although octanoyl-ACP is likely to be the physiological substrate. This Hydrogenovibrio crunogenus (strain DSM 25203 / XCL-2) (Thiomicrospira crunogena) protein is Octanoyltransferase.